Reading from the N-terminus, the 131-residue chain is Profilin-10 (131 aa).

Cysteine 13 and cysteine 115 are joined by a disulfide. The Involved in PIP2 interaction signature appears at 81 to 97 (AVIRGKKGAGGITIKKT). Phosphothreonine is present on threonine 111.

It belongs to the profilin family. As to quaternary structure, occurs in many kinds of cells as a complex with monomeric actin in a 1:1 ratio. Phosphorylated by MAP kinases.

Its subcellular location is the cytoplasm. It is found in the cytoskeleton. Functionally, binds to actin and affects the structure of the cytoskeleton. At high concentrations, profilin prevents the polymerization of actin, whereas it enhances it at low concentrations. The protein is Profilin-10 of Phleum pratense (Common timothy).